The primary structure comprises 335 residues: Trans-1,2-dihydrobenzene-1,2-diol dehydrogenase (335 aa).

Belongs to the Gfo/Idh/MocA family. Homodimer. In terms of tissue distribution, liver, lens, spleen, kidney and small intestine.

The enzyme catalyses (1R,2R)-1,2-dihydrobenzene-1,2-diol + NADP(+) = catechol + NADPH + H(+). The catalysed reaction is D-xylose + NADP(+) = D-xylono-1,5-lactone + NADPH + H(+). Strongly inhibited by isoascorbic acid, 4-hydroxyacetophenone and chloromercuriphenylsulphonate. Stimulated by various salts. This is Trans-1,2-dihydrobenzene-1,2-diol dehydrogenase (DHDH) from Sus scrofa (Pig).